The following is a 154-amino-acid chain: Myoglobin (154 aa).

The Globin domain maps to 2 to 148 (GLSDGEWQLV…FRNDMAAKYK (147 aa)). A Phosphoserine modification is found at serine 4. Position 65 (histidine 65) interacts with nitrite. Residue histidine 65 participates in O2 binding. Threonine 68 carries the phosphothreonine modification. Histidine 94 serves as a coordination point for heme b.

This sequence belongs to the globin family. As to quaternary structure, monomeric.

The protein localises to the cytoplasm. It localises to the sarcoplasm. The catalysed reaction is Fe(III)-heme b-[protein] + nitric oxide + H2O = Fe(II)-heme b-[protein] + nitrite + 2 H(+). The enzyme catalyses H2O2 + AH2 = A + 2 H2O. In terms of biological role, monomeric heme protein which primary function is to store oxygen and facilitate its diffusion within muscle tissues. Reversibly binds oxygen through a pentacoordinated heme iron and enables its timely and efficient release as needed during periods of heightened demand. Depending on the oxidative conditions of tissues and cells, and in addition to its ability to bind oxygen, it also has a nitrite reductase activity whereby it regulates the production of bioactive nitric oxide. Under stress conditions, like hypoxia and anoxia, it also protects cells against reactive oxygen species thanks to its pseudoperoxidase activity. In Erythrocebus patas (Red guenon), this protein is Myoglobin (MB).